The following is a 190-amino-acid chain: MKRFMQIWKPAVVGFLLLTLMCGVVYPGIVTIFASAAFHDKANGSIIEEKRADGTTRKVGSAEIGQTFTKPEYLIGRAASDGAATNLNPTSEEQKQLVEKRIAWWHKLDPTNNRVIPMDLVTASASGVDPDISEAAAAYQVDRISRERGISTKQVKEIIAEHTSDRLLGFWGEPTVNVLQVNLALDRLKM.

A helical transmembrane segment spans residues 13–33 (VGFLLLTLMCGVVYPGIVTIF).

This sequence belongs to the KdpC family. In terms of assembly, the system is composed of three essential subunits: KdpA, KdpB and KdpC.

It localises to the cell membrane. Its function is as follows. Part of the high-affinity ATP-driven potassium transport (or Kdp) system, which catalyzes the hydrolysis of ATP coupled with the electrogenic transport of potassium into the cytoplasm. This subunit acts as a catalytic chaperone that increases the ATP-binding affinity of the ATP-hydrolyzing subunit KdpB by the formation of a transient KdpB/KdpC/ATP ternary complex. This is Potassium-transporting ATPase KdpC subunit from Listeria monocytogenes serotype 4a (strain HCC23).